Reading from the N-terminus, the 245-residue chain is Endogenous retrovirus group K member 5 Env polyprotein (245 aa).

The segment at 1 to 245 (MVTPVTWMDN…TLEFGLEIKL (245 aa)) is truncated surface protein.

This sequence belongs to the beta type-B retroviral envelope protein family. HERV class-II K(HML-2) env subfamily. Expressed in lung, placenta, testis, peripheral blood lymphocytes, and teratocarcinoma cell lines.

The protein localises to the virion. Its function is as follows. Retroviral envelope proteins mediate receptor recognition and membrane fusion during early infection. Endogenous envelope proteins may have kept, lost or modified their original function during evolution. The polypeptide is Endogenous retrovirus group K member 5 Env polyprotein (ERVK-5) (Homo sapiens (Human)).